The following is a 591-amino-acid chain: Aspartate--tRNA ligase (591 aa).

Glu-173 contributes to the L-aspartate binding site. The segment at 197-200 (QLFK) is aspartate. Arg-219 contributes to the L-aspartate binding site. ATP is bound by residues 219–221 (RDE) and Gln-228. His-448 contacts L-aspartate. Position 482 (Glu-482) interacts with ATP. An L-aspartate-binding site is contributed by Arg-489. 534-537 (GLDR) serves as a coordination point for ATP.

It belongs to the class-II aminoacyl-tRNA synthetase family. Type 1 subfamily. As to quaternary structure, homodimer.

It localises to the cytoplasm. The enzyme catalyses tRNA(Asp) + L-aspartate + ATP = L-aspartyl-tRNA(Asp) + AMP + diphosphate. Catalyzes the attachment of L-aspartate to tRNA(Asp) in a two-step reaction: L-aspartate is first activated by ATP to form Asp-AMP and then transferred to the acceptor end of tRNA(Asp). This Shewanella oneidensis (strain ATCC 700550 / JCM 31522 / CIP 106686 / LMG 19005 / NCIMB 14063 / MR-1) protein is Aspartate--tRNA ligase.